We begin with the raw amino-acid sequence, 109 residues long: Large ribosomal subunit protein uL22 (109 aa).

It belongs to the universal ribosomal protein uL22 family. Part of the 50S ribosomal subunit.

Functionally, this protein binds specifically to 23S rRNA; its binding is stimulated by other ribosomal proteins, e.g. L4, L17, and L20. It is important during the early stages of 50S assembly. It makes multiple contacts with different domains of the 23S rRNA in the assembled 50S subunit and ribosome. Its function is as follows. The globular domain of the protein is located near the polypeptide exit tunnel on the outside of the subunit, while an extended beta-hairpin is found that lines the wall of the exit tunnel in the center of the 70S ribosome. The sequence is that of Large ribosomal subunit protein uL22 from Chromobacterium violaceum (strain ATCC 12472 / DSM 30191 / JCM 1249 / CCUG 213 / NBRC 12614 / NCIMB 9131 / NCTC 9757 / MK).